Consider the following 421-residue polypeptide: ATP-dependent RNA helicase RhlB (421 aa).

Residues 9–37 (QKFSDFALHPKVIEALENKGFHNCTPIQA) carry the Q motif motif. Residues 40–219 (LPLTLAGRDV…FEQMNNAEYV (180 aa)) form the Helicase ATP-binding domain. 53-60 (AQTGTGKT) contacts ATP. The DEAD box signature appears at 165–168 (DEAD). One can recognise a Helicase C-terminal domain in the interval 245–390 (RLLQTLIEEE…VSKYNPEALM (146 aa)). The interval 393-421 (LPKPLRLTRSRPGNGPRRTGAPRNRRRSG) is disordered. A compositionally biased stretch (low complexity) spans 403-414 (RPGNGPRRTGAP).

This sequence belongs to the DEAD box helicase family. RhlB subfamily. In terms of assembly, component of the RNA degradosome, which is a multiprotein complex involved in RNA processing and mRNA degradation.

The protein resides in the cytoplasm. The catalysed reaction is ATP + H2O = ADP + phosphate + H(+). In terms of biological role, DEAD-box RNA helicase involved in RNA degradation. Has RNA-dependent ATPase activity and unwinds double-stranded RNA. This Citrobacter koseri (strain ATCC BAA-895 / CDC 4225-83 / SGSC4696) protein is ATP-dependent RNA helicase RhlB.